Consider the following 284-residue polypeptide: Bifunctional protein FolD (284 aa).

166-168 (GAS) is a binding site for NADP(+).

The protein belongs to the tetrahydrofolate dehydrogenase/cyclohydrolase family. In terms of assembly, homodimer.

It catalyses the reaction (6R)-5,10-methylene-5,6,7,8-tetrahydrofolate + NADP(+) = (6R)-5,10-methenyltetrahydrofolate + NADPH. It carries out the reaction (6R)-5,10-methenyltetrahydrofolate + H2O = (6R)-10-formyltetrahydrofolate + H(+). It participates in one-carbon metabolism; tetrahydrofolate interconversion. In terms of biological role, catalyzes the oxidation of 5,10-methylenetetrahydrofolate to 5,10-methenyltetrahydrofolate and then the hydrolysis of 5,10-methenyltetrahydrofolate to 10-formyltetrahydrofolate. The chain is Bifunctional protein FolD from Legionella pneumophila (strain Paris).